The primary structure comprises 232 residues: Putative membrane protein ORF8 (232 aa).

Low complexity predominate over residues 71-84; sequence GSSAASIPSAPTPD. Positions 71 to 121 are disordered; it reads GSSAASIPSAPTPDATRESPTGEPHRDRALSTETPTPEPSRDGGSTPEVLH. 2 helical membrane-spanning segments follow: residues 166–182 and 195–211; these read VFARALAAAEIAIGSVA and LVVTSLVFAGVALWVIV.

The protein localises to the membrane. The chain is Putative membrane protein ORF8 (ORF8) from Ictalurid herpesvirus 1 (strain Auburn) (IcHV-1).